We begin with the raw amino-acid sequence, 263 residues long: Large ribosomal subunit protein uL10m (263 aa).

The transit peptide at 1-29 (MPFSVEVEVFFLLVEDKLGWLPTLQPVRH) directs the protein to the mitochondrion. The segment at 241–263 (QHEGDCATSTEGKPHPPDPAPDS) is disordered.

It belongs to the universal ribosomal protein uL10 family. In terms of assembly, component of the mitochondrial ribosome large subunit (39S) which comprises a 16S rRNA and about 50 distinct proteins.

It localises to the mitochondrion. This chain is Large ribosomal subunit protein uL10m (Mrpl10), found in Rattus norvegicus (Rat).